A 236-amino-acid polypeptide reads, in one-letter code: Small ribosomal subunit protein uS2c (236 aa).

The protein belongs to the universal ribosomal protein uS2 family.

It localises to the plastid. The protein resides in the chloroplast. In Eucalyptus globulus subsp. globulus (Tasmanian blue gum), this protein is Small ribosomal subunit protein uS2c (rps2).